The following is a 231-amino-acid chain: Endonuclease NucS (231 aa).

Belongs to the NucS endonuclease family.

It is found in the cytoplasm. Functionally, cleaves both 3' and 5' ssDNA extremities of branched DNA structures. This is Endonuclease NucS from Micrococcus luteus (strain ATCC 4698 / DSM 20030 / JCM 1464 / CCM 169 / CCUG 5858 / IAM 1056 / NBRC 3333 / NCIMB 9278 / NCTC 2665 / VKM Ac-2230) (Micrococcus lysodeikticus).